A 133-amino-acid polypeptide reads, in one-letter code: Oocytes ribonuclease (133 aa).

An N-terminal signal peptide occupies residues 1-22 (MCAKSLLLVFGILLGLSHLSLS). Position 23 is a pyrrolidone carboxylic acid (Q23). H32 functions as the Proton acceptor in the catalytic mechanism. Intrachain disulfides connect C41–C93, C56–C103, C74–C118, and C115–C132. Residue 57–61 (KRVNT) coordinates substrate. H125 serves as the catalytic Proton donor.

Belongs to the pancreatic ribonuclease family. In terms of assembly, monomer.

Its subcellular location is the secreted. In terms of biological role, preferentially cleaves single-stranded RNA at pyrimidine residues with a 3'flanking guanine. Hydrolyzes poly(U) and poly(C) as substrates, and prefers the former. The S-lectins in frog eggs may be involved in the fertilization and development of the frog embryo. This lectin agglutinates various animal cells, including normal lymphocytes, erythrocytes, and fibroblasts of animal and human origin. It is cytotoxic against several tumor cells. This is Oocytes ribonuclease (RCR) from Aquarana catesbeiana (American bullfrog).